Reading from the N-terminus, the 104-residue chain is Vesicle-associated membrane protein 3 (104 aa).

The interval 1–23 (MTTNAPAGSSAAAGSSRRLQQTQ) is disordered. Topologically, residues 1 to 81 (MTTNAPAGSS…KRKYWWKNCK (81 aa)) are cytoplasmic. Residues 7-16 (AGSSAAAGSS) show a composition bias toward low complexity. The region spanning 18 to 78 (RLQQTQNQVD…AKLKRKYWWK (61 aa)) is the v-SNARE coiled-coil homology domain. Glycyl lysine isopeptide (Lys-Gly) (interchain with G-Cter in ubiquitin) cross-links involve residues K70, K72, and K81. The chain crosses the membrane as a helical; Anchor for type IV membrane protein span at residues 82-102 (MWAIGITVVVIIIIIIVVWSI). At 103–104 (SS) the chain is on the vesicular side.

The protein belongs to the synaptobrevin family. Interacts with POPDC1 (via the C-terminus cytoplasmic tail). Interacts with BCAP31; involved in VAMP3 export from the endoplasmic reticulum. Interacts with BAIAP3; this interaction is increased in the presence of calcium. Interacts with PICALM. In terms of processing, ubiquitinated by RNF167 at Lys-70, Lys-72 and Lys-81, regulating the recycling endosome pathway.

The protein resides in the early endosome membrane. Its subcellular location is the recycling endosome membrane. It localises to the synapse. It is found in the synaptosome. In terms of biological role, SNARE involved in vesicular transport from the late endosomes to the trans-Golgi network. This chain is Vesicle-associated membrane protein 3 (VAMP3), found in Bos taurus (Bovine).